A 438-amino-acid polypeptide reads, in one-letter code: UDP-N-acetylmuramoylalanine--D-glutamate ligase (438 aa).

An ATP-binding site is contributed by 112-118; sequence GSNGKST.

The protein belongs to the MurCDEF family.

It localises to the cytoplasm. It carries out the reaction UDP-N-acetyl-alpha-D-muramoyl-L-alanine + D-glutamate + ATP = UDP-N-acetyl-alpha-D-muramoyl-L-alanyl-D-glutamate + ADP + phosphate + H(+). It functions in the pathway cell wall biogenesis; peptidoglycan biosynthesis. Cell wall formation. Catalyzes the addition of glutamate to the nucleotide precursor UDP-N-acetylmuramoyl-L-alanine (UMA). The chain is UDP-N-acetylmuramoylalanine--D-glutamate ligase from Salmonella choleraesuis (strain SC-B67).